The chain runs to 371 residues: Choline kinase B1 (371 aa).

The protein belongs to the choline/ethanolamine kinase family. Mg(2+) is required as a cofactor.

The enzyme catalyses choline + ATP = phosphocholine + ADP + H(+). This chain is Choline kinase B1 (ckb-1), found in Caenorhabditis elegans.